The sequence spans 123 residues: Maintenance of telomere capping protein 3, mitochondrial (123 aa).

The transit peptide at 1–37 directs the protein to the mitochondrion; that stretch reads MMGRNGIRLALKRSFSTYQPPVVEITNITKLWPTLRP.

The protein localises to the mitochondrion. In terms of biological role, may be involved in telomere capping. In Saccharomyces cerevisiae (strain ATCC 204508 / S288c) (Baker's yeast), this protein is Maintenance of telomere capping protein 3, mitochondrial (MTC3).